The primary structure comprises 123 residues: Small ribosomal subunit protein uS12 (123 aa).

3-methylthioaspartic acid is present on aspartate 89.

It belongs to the universal ribosomal protein uS12 family. As to quaternary structure, part of the 30S ribosomal subunit. Contacts proteins S8 and S17. May interact with IF1 in the 30S initiation complex.

Its function is as follows. With S4 and S5 plays an important role in translational accuracy. Functionally, interacts with and stabilizes bases of the 16S rRNA that are involved in tRNA selection in the A site and with the mRNA backbone. Located at the interface of the 30S and 50S subunits, it traverses the body of the 30S subunit contacting proteins on the other side and probably holding the rRNA structure together. The combined cluster of proteins S8, S12 and S17 appears to hold together the shoulder and platform of the 30S subunit. This Syntrophus aciditrophicus (strain SB) protein is Small ribosomal subunit protein uS12.